Reading from the N-terminus, the 304-residue chain is MNRLAVEIPGLSLKNPIMPASGCFGFGQEYSKYYDLNKLGAIMAKAVTPEPRLGNPTPRVAETASGMLNAIGLQNPGLEHVLAHELPFLEQFETPIIANVAGATEDDYVEVCSRIGESKAVKAIELNISCPNVKHGGIAFGTDPEVAHRLTKAVKSVASVPVYVKLSPNVADIVSIAQAIEAAGADGLTMINTLLGMRIDLKTRKPIIANGTGGLSGPAIKPVAIRMIHQVRSVSNIPIIGMGGVQTVDDVLEFLIAGADAVAVGTMNFTDPFICPKLITELPIRMDELGISSLQELKKERANQ.

Residues Ser-21 and 45–46 contribute to the FMN site; that span reads KA. Residues Lys-45 and 69–73 contribute to the substrate site; that span reads NAIGL. FMN contacts are provided by Asn-99 and Asn-127. Asn-127 contributes to the substrate binding site. The active-site Nucleophile is Cys-130. FMN contacts are provided by Lys-165 and Ile-191. 192–193 is a binding site for substrate; sequence NT. Residues Gly-217, 243 to 244, and 265 to 266 each bind FMN; these read GG and GT.

The protein belongs to the dihydroorotate dehydrogenase family. Type 1 subfamily. As to quaternary structure, heterotetramer of 2 PyrK and 2 PyrD type B subunits. FMN serves as cofactor.

Its subcellular location is the cytoplasm. It catalyses the reaction (S)-dihydroorotate + NAD(+) = orotate + NADH + H(+). It participates in pyrimidine metabolism; UMP biosynthesis via de novo pathway; orotate from (S)-dihydroorotate (NAD(+) route): step 1/1. Functionally, catalyzes the conversion of dihydroorotate to orotate with NAD(+) as electron acceptor. In Listeria welshimeri serovar 6b (strain ATCC 35897 / DSM 20650 / CCUG 15529 / CIP 8149 / NCTC 11857 / SLCC 5334 / V8), this protein is Dihydroorotate dehydrogenase B (NAD(+)), catalytic subunit (pyrD).